Consider the following 335-residue polypeptide: Teichoic acids export ATP-binding protein TagH (335 aa).

The 221-residue stretch at 26 to 246 (IKGLFMPKSQ…YDEFVKWFNK (221 aa)) folds into the ABC transporter domain. 60–67 (GINGSGKS) lines the ATP pocket.

This sequence belongs to the ABC transporter superfamily. Teichoic acids exporter (TC 3.A.1.104.1) family. In terms of assembly, the complex is composed of two ATP-binding proteins (TagH) and two transmembrane proteins (TagG).

The protein resides in the cell membrane. The catalysed reaction is ATP + H2O + teichoic acidSide 1 = ADP + phosphate + teichoic acidSide 2.. Functionally, part of the ABC transporter complex TagGH involved in teichoic acids export. Responsible for energy coupling to the transport system. In Listeria innocua serovar 6a (strain ATCC BAA-680 / CLIP 11262), this protein is Teichoic acids export ATP-binding protein TagH.